The sequence spans 475 residues: Ribulose bisphosphate carboxylase large chain (475 aa).

The propeptide occupies 1 to 2; sequence MS. Proline 3 bears the N-acetylproline mark. Lysine 14 is subject to N6,N6,N6-trimethyllysine. The substrate site is built by asparagine 123 and threonine 173. Catalysis depends on lysine 175, which acts as the Proton acceptor. Lysine 177 provides a ligand contact to substrate. Residues lysine 201, aspartate 203, and glutamate 204 each contribute to the Mg(2+) site. Lysine 201 carries the N6-carboxylysine modification. The active-site Proton acceptor is histidine 294. Substrate-binding residues include arginine 295, histidine 327, and serine 379.

The protein belongs to the RuBisCO large chain family. Type I subfamily. Heterohexadecamer of 8 large chains and 8 small chains; disulfide-linked. The disulfide link is formed within the large subunit homodimers. Mg(2+) is required as a cofactor. Post-translationally, the disulfide bond which can form in the large chain dimeric partners within the hexadecamer appears to be associated with oxidative stress and protein turnover.

Its subcellular location is the plastid. The protein resides in the chloroplast. The enzyme catalyses 2 (2R)-3-phosphoglycerate + 2 H(+) = D-ribulose 1,5-bisphosphate + CO2 + H2O. It catalyses the reaction D-ribulose 1,5-bisphosphate + O2 = 2-phosphoglycolate + (2R)-3-phosphoglycerate + 2 H(+). In terms of biological role, ruBisCO catalyzes two reactions: the carboxylation of D-ribulose 1,5-bisphosphate, the primary event in carbon dioxide fixation, as well as the oxidative fragmentation of the pentose substrate in the photorespiration process. Both reactions occur simultaneously and in competition at the same active site. This Stellaria media (Common chickweed) protein is Ribulose bisphosphate carboxylase large chain.